The chain runs to 87 residues: UPF0250 protein YbeD (87 aa).

It belongs to the UPF0250 family.

The polypeptide is UPF0250 protein YbeD (Shigella boydii serotype 18 (strain CDC 3083-94 / BS512)).